A 340-amino-acid chain; its full sequence is MTVNVAVLGAGSWGTILANLLVENGHHVELWGNDPEKVAEINEQHTNKHYLPEFKIDSRLHATLDLNEAFEAVDVVLFVIPTQVIRLVAEQIAPVLEAKGVKPVIVTASKGLEQGSHKRISEVLTETIPADIRNGIVVLSGPSHAEDVAMKDITTLTAASTDLVQAQWIQEIFMNDYFRLYTNTDVIGVEMGAALKNVIALGAGALHGLGYGDNTKAALMTRGLAEISRLGVAMGANPLTFIGLSGVGDLIVTGTSVHSRNWRTGNALGEGQKLDDVLENMGMVVEGVATCKAAYELAQQRSVDMPITNAIYNVLYRGCDIRTEIGNLMQRSGKPEIDFK.

3 residues coordinate NADPH: S12, W13, and K110. Sn-glycerol 3-phosphate contacts are provided by K110, G141, and S143. Position 145 (A145) interacts with NADPH. 5 residues coordinate sn-glycerol 3-phosphate: K196, D249, S259, R260, and N261. Residue K196 is the Proton acceptor of the active site. Position 260 (R260) interacts with NADPH. NADPH is bound by residues V284 and E286.

The protein belongs to the NAD-dependent glycerol-3-phosphate dehydrogenase family.

It is found in the cytoplasm. The enzyme catalyses sn-glycerol 3-phosphate + NAD(+) = dihydroxyacetone phosphate + NADH + H(+). The catalysed reaction is sn-glycerol 3-phosphate + NADP(+) = dihydroxyacetone phosphate + NADPH + H(+). Its pathway is membrane lipid metabolism; glycerophospholipid metabolism. Its function is as follows. Catalyzes the reduction of the glycolytic intermediate dihydroxyacetone phosphate (DHAP) to sn-glycerol 3-phosphate (G3P), the key precursor for phospholipid synthesis. The polypeptide is Glycerol-3-phosphate dehydrogenase [NAD(P)+] (Latilactobacillus sakei subsp. sakei (strain 23K) (Lactobacillus sakei subsp. sakei)).